The primary structure comprises 286 residues: Energy-coupling factor transporter ATP-binding protein EcfA2 (286 aa).

The 244-residue stretch at 3 to 246 (IQFNQVSYIY…KTQLLKWHIE (244 aa)) folds into the ABC transporter domain. 40–47 (GQTGSGKS) contacts ATP.

The protein belongs to the ABC transporter superfamily. Energy-coupling factor EcfA family. In terms of assembly, forms a stable energy-coupling factor (ECF) transporter complex composed of 2 membrane-embedded substrate-binding proteins (S component), 2 ATP-binding proteins (A component) and 2 transmembrane proteins (T component).

It localises to the cell membrane. Its function is as follows. ATP-binding (A) component of a common energy-coupling factor (ECF) ABC-transporter complex. Unlike classic ABC transporters this ECF transporter provides the energy necessary to transport a number of different substrates. The chain is Energy-coupling factor transporter ATP-binding protein EcfA2 from Staphylococcus epidermidis (strain ATCC 12228 / FDA PCI 1200).